We begin with the raw amino-acid sequence, 65 residues long: Large ribosomal subunit protein bL32 (65 aa).

The segment covering 1-18 (MAVPKRRHSKSRTRKRRS) has biased composition (basic residues). Positions 1–20 (MAVPKRRHSKSRTRKRRSTY) are disordered.

The protein belongs to the bacterial ribosomal protein bL32 family.

The sequence is that of Large ribosomal subunit protein bL32 from Salinibacter ruber (strain DSM 13855 / M31).